Consider the following 274-residue polypeptide: MQFSKMHGLGNDFMVVDAVTQNVYFSPELICRLANRHTGVGFDQLLVVEAPYDPELDFHYRIFNADGSEVAQCGNGARCFARFVRIKGLTNKREIKVSTQSGRMTLHVMDNEDVCVNMGEPEFEPQKVPFRAQKVEKTYIIRAMERTVLCGVVSMGNPHCVIQVEDIKTAEVESLGSVLEQHERFPERANIGFMQVVDRNTLHLRVFERGAGETQACGSGACAAVAVGISQGLLDRKVKVNLPGGSLSIEWKGTGNPLYMTGPAVHIYDGTIQL.

Residues asparagine 11, glutamine 44, and asparagine 64 each contribute to the substrate site. The active-site Proton donor is the cysteine 73. Residues 74 to 75 (GN), asparagine 157, asparagine 190, and 208 to 209 (ER) contribute to the substrate site. Cysteine 217 serves as the catalytic Proton acceptor. Residue 218-219 (GS) coordinates substrate.

It belongs to the diaminopimelate epimerase family. As to quaternary structure, homodimer.

The protein localises to the cytoplasm. The catalysed reaction is (2S,6S)-2,6-diaminopimelate = meso-2,6-diaminopimelate. It participates in amino-acid biosynthesis; L-lysine biosynthesis via DAP pathway; DL-2,6-diaminopimelate from LL-2,6-diaminopimelate: step 1/1. Its function is as follows. Catalyzes the stereoinversion of LL-2,6-diaminopimelate (L,L-DAP) to meso-diaminopimelate (meso-DAP), a precursor of L-lysine and an essential component of the bacterial peptidoglycan. This chain is Diaminopimelate epimerase, found in Proteus mirabilis (strain HI4320).